A 37-amino-acid polypeptide reads, in one-letter code: Large ribosomal subunit protein bL36 (37 aa).

It belongs to the bacterial ribosomal protein bL36 family.

The sequence is that of Large ribosomal subunit protein bL36 from Nostoc sp. (strain PCC 7120 / SAG 25.82 / UTEX 2576).